The sequence spans 350 residues: Guanine nucleotide-binding protein G(t) subunit alpha-1 (350 aa).

A disordered region spans residues 1–21 (MGAGASAEEKHSRELEKKLKE). Residue Gly-2 is the site of N-myristoyl glycine attachment. Positions 7-21 (AEEKHSRELEKKLKE) are enriched in basic and acidic residues. One can recognise a G-alpha domain in the interval 28–350 (RTVKLLLLGA…KENLKDCGLF (323 aa)). The segment at 31–44 (KLLLLGAGESGKST) is G1 motif. 36–43 (GAGESGKS) is a binding site for GTP. Ser-43 is a Mg(2+) binding site. Phosphotyrosine; by SRC is present on Tyr-142. GTP is bound by residues Asp-146, 171 to 177 (LRSRVKT), Gly-199, 265 to 268 (NKKD), and Ala-322. The G2 motif stretch occupies residues 169–177 (DVLRSRVKT). Arg-174 is modified (ADP-ribosylarginine; by cholera toxin). Residue Thr-177 participates in Mg(2+) binding. Positions 192 to 201 (FRMFDVGGQR) are G3 motif. Residues 261–268 (VLFLNKKD) form a G4 motif region. The interval 320-325 (TCATDT) is G5 motif. The tract at residues 340–350 (IKENLKDCGLF) is interaction with RHO. Position 347 is an ADP-ribosylcysteine; by pertussis toxin (Cys-347).

Belongs to the G-alpha family. G(i/o/t/z) subfamily. Heterotrimeric G proteins are composed of 3 subunits alpha, beta and gamma. The alpha chain contains the guanine nucleotide binding site. Interacts with RHO. Interacts with RGS9 and PDE6G. Interacts (when myristoylated) with UNC119; interaction is required for localization in sensory neurons. Rod photoreceptor cells. Predominantly expressed in the retina followed by the ciliary body, iris and retinal pigment epithelium.

It is found in the cell projection. Its subcellular location is the cilium. It localises to the photoreceptor outer segment. The protein localises to the membrane. The protein resides in the photoreceptor inner segment. Functionally, functions as a signal transducer for the rod photoreceptor RHO. Required for normal RHO-mediated light perception by the retina. Guanine nucleotide-binding proteins (G proteins) function as transducers downstream of G protein-coupled receptors (GPCRs), such as the photoreceptor RHO. The alpha chain contains the guanine nucleotide binding site and alternates between an active, GTP-bound state and an inactive, GDP-bound state. Activated RHO promotes GDP release and GTP binding. Signaling is mediated via downstream effector proteins, such as cGMP-phosphodiesterase. The polypeptide is Guanine nucleotide-binding protein G(t) subunit alpha-1 (GNAT1) (Homo sapiens (Human)).